We begin with the raw amino-acid sequence, 972 residues long: Glycine dehydrogenase (decarboxylating) (972 aa).

Residue K713 is modified to N6-(pyridoxal phosphate)lysine.

The protein belongs to the GcvP family. The glycine cleavage system is composed of four proteins: P, T, L and H. It depends on pyridoxal 5'-phosphate as a cofactor.

It catalyses the reaction N(6)-[(R)-lipoyl]-L-lysyl-[glycine-cleavage complex H protein] + glycine + H(+) = N(6)-[(R)-S(8)-aminomethyldihydrolipoyl]-L-lysyl-[glycine-cleavage complex H protein] + CO2. Functionally, the glycine cleavage system catalyzes the degradation of glycine. The P protein binds the alpha-amino group of glycine through its pyridoxal phosphate cofactor; CO(2) is released and the remaining methylamine moiety is then transferred to the lipoamide cofactor of the H protein. The sequence is that of Glycine dehydrogenase (decarboxylating) from Aromatoleum aromaticum (strain DSM 19018 / LMG 30748 / EbN1) (Azoarcus sp. (strain EbN1)).